Here is a 498-residue protein sequence, read N- to C-terminus: Putative antiporter subunit mnhD2 (498 aa).

Transmembrane regions (helical) follow at residues 2–22 (LSNL…ILVF), 32–52 (YLYL…LIYV), 78–98 (LSLI…AYGF), 108–128 (YHLP…FLTS), 130–150 (LFNL…LITL), 161–181 (IIYV…IGLL), 209–229 (ISLI…FMWL), 240–260 (LAAL…IRFF), 271–291 (IHPL…IGVI), 308–328 (IGFI…GAIF), 330–350 (LVND…LVYI), 369–389 (FGVA…FSGF), 403–423 (GNYI…YSLF), and 451–471 (ILSI…VVLN).

It belongs to the CPA3 antiporters (TC 2.A.63) subunit D family. In terms of assembly, may form a heterooligomeric complex that consists of seven subunits: mnhA2, mnhB2, mnhC2, mnhD2, mnhE2, mnhF2 and mnhG2.

It localises to the cell membrane. This chain is Putative antiporter subunit mnhD2 (mnhD2), found in Staphylococcus aureus (strain JH1).